Consider the following 478-residue polypeptide: UDP-N-acetylmuramate--L-alanine ligase (478 aa).

Position 125-131 (125-131) interacts with ATP; the sequence is GTHGKTT.

The protein belongs to the MurCDEF family.

Its subcellular location is the cytoplasm. It carries out the reaction UDP-N-acetyl-alpha-D-muramate + L-alanine + ATP = UDP-N-acetyl-alpha-D-muramoyl-L-alanine + ADP + phosphate + H(+). It participates in cell wall biogenesis; peptidoglycan biosynthesis. Its function is as follows. Cell wall formation. The chain is UDP-N-acetylmuramate--L-alanine ligase from Dichelobacter nodosus (strain VCS1703A).